The sequence spans 21 residues: Cyanophlyctin (21 aa).

Expressed by the skin glands.

It localises to the secreted. Functionally, has antibacterial activity against E.coli HP101BA (MIC=6.4 uM), K.pneumoniae PTCC1388 (MIC=7.3 uM), M.luteus PTCC1625 (MIC=4.7 uM) and S.aureus PTCC1431 (MIC=5.3 uM). Has no or very limited (&lt;3%) hemolytic activity at concentrations of 15 ug/ml and 60 ug/ml, respectively. In Euphlyctis cyanophlyctis (Skittering frog), this protein is Cyanophlyctin.